The chain runs to 147 residues: Large ribosomal subunit protein uL13 (147 aa).

It belongs to the universal ribosomal protein uL13 family. Part of the 50S ribosomal subunit.

Functionally, this protein is one of the early assembly proteins of the 50S ribosomal subunit, although it is not seen to bind rRNA by itself. It is important during the early stages of 50S assembly. The sequence is that of Large ribosomal subunit protein uL13 from Levilactobacillus brevis (strain ATCC 367 / BCRC 12310 / CIP 105137 / JCM 1170 / LMG 11437 / NCIMB 947 / NCTC 947) (Lactobacillus brevis).